A 1077-amino-acid chain; its full sequence is TSC22 domain family protein 1 (1077 aa).

The tract at residues 1–98 (MHQPPESTAA…SQAQLQGQPL (98 aa)) is required for interaction with TGFBR1 and promotion of TGF-beta signaling. Disordered regions lie at residues 22-112 (MAHP…SGFQ), 125-283 (ISSN…VPSS), 458-492 (QTPT…SVGS), 842-874 (SSAA…GSLV), and 909-947 (QAIG…SDGS). Over residues 58–70 (FPPPSLLQPPPPA) the composition is skewed to pro residues. Positions 84–96 (SLNLLSQAQLQGQ) are enriched in low complexity. Over residues 133-142 (EDTESYDDLD) the composition is skewed to acidic residues. The span at 216-240 (HPHHLHHHHHPHHGHHLHHGHHHSS) shows a compositional bias: basic residues. S263 bears the Phosphoserine mark. Residues 471–489 (TSGSSVSSSVSTLSHYTES) are compositionally biased toward low complexity. Residues 852-874 (VPTNLVPPQNIAQPPATQNGSLV) are compositionally biased toward polar residues. Over residues 933 to 947 (MSGDSGGMSAVSDGS) the composition is skewed to low complexity. Residues 1010–1031 (LKEQIKELIEKNSQLEQENNLL) are leucine-zipper. Positions 1042–1077 (QFQAQLQTGSPPATTQPQGTTQPPAQPASQGSGSTA) are disordered. Over residues 1048 to 1077 (QTGSPPATTQPQGTTQPPAQPASQGSGSTA) the composition is skewed to low complexity.

It belongs to the TSC-22/Dip/Bun family. In terms of assembly, forms homodimers. Forms heterodimers. Component of a complex composed of TSC22D1 (via N-terminus), TGFBR1 and TGFBR2; the interaction between TSC22D1 and TGFBR1 is inhibited by SMAD7 and promoted by TGFB1. Interacts with SMAD7; the interaction requires TGF-beta and the interaction is inhibited by TGFBR1. Interacts with TPT1/fortilin; interaction results in the destabilization of TSC22D1 protein and prevents TSC22D1-mediated apoptosis. Interacts with SMAD4 (via N-terminus). Interacts with ACVRL1/ALK1, ACVR1/ALK2, BMPR1A/ALK3, ACVR1B/ALK4, BMPR1B/ALK6, ACVR2A/ACTRII, and BMPR2. Interacts with SMAD6. Interacts with TFE3; the interaction is enhanced in the presence of TGF-beta. Forms a heterodimer with TSC22D4/THG1. As to quaternary structure, forms a heterodimer with TSC22D4/THG1. Interacts with histone H1-2. Interacts with GNL3. Expressed in bone marrow cells (at protein level). Expressed in T-cells. Expressed in the brain. In terms of tissue distribution, expressed in the myoepithelial cells of the mammary gland ducts and alveoli, expression is consistent throughout pregnancy, lactation and involution (at protein level). Expressed in the cortex, medulla and papilla of the kidney. As to expression, expressed in the myoepithelial cells of the mammary gland, expression significantly increases in the secretory luminal epithelium of the mammary gland at the initiation of involution, with levels decreasing from day 3 of involution onwards (at protein level). Expressed in the cortex, medulla and papilla of the kidney.

It localises to the cytoplasm. The protein resides in the nucleus. It is found in the cell membrane. The protein localises to the mitochondrion. In terms of biological role, transcriptional repressor. Acts on the C-type natriuretic peptide (CNP) promoter. Acts to promote CASP3-mediated apoptosis. Positively regulates TGF-beta signaling by interacting with SMAD7 which inhibits binding of SMAD7 to TGFBR1, preventing recruitment of SMURF ubiquitin ligases to TGFBR1 and inhibiting SMURF-mediated ubiquitination and degradation of TGFBR1. Contributes to enhancement of TGF-beta signaling by binding to and modulating the transcription activator activity of SMAD4. Promotes TGF-beta-induced transcription of COL1A2; via its interaction with TFE3 at E-boxes in the gene proximal promoter. Plays a role in the repression of hematopoietic precursor cell growth. Promotes IL2 deprivation-induced apoptosis in T-lymphocytes, via repression of TSC22D3/GILZ transcription and activation of the caspase cascade. Its function is as follows. May act to negatively regulate TGFB3 signaling and thereby inhibit cell death in mammary gland cells. Positively regulates cell death in response to TGFB3 during mammary gland involution. This Mus musculus (Mouse) protein is TSC22 domain family protein 1.